We begin with the raw amino-acid sequence, 266 residues long: Early E1A protein (266 aa).

The segment at 39–47 is interaction with RB1 in competition with E2F1; that stretch reads PSLYELYDL. The segment at 75–145 is interaction with UBE2I; it reads EGLFLPEPPV…AAAAADRERE (71 aa). The short motif at 98-102 is the PXLXP motif, interaction with host ZMYND11 element; the sequence is PQLHP. An LXCXE motif, interaction with host RB1 and TMEM173/STING motif is present at residues 107 to 111; it reads LLCYE. Residues 159–179 fold into a zinc finger; the sequence is CKSCEHHRNSTGNTDLMCSLC. Residues 195 to 226 form a disordered region; sequence NEPEPNSTLDGDERPSPPKLGSAVPEGVIKPV. The PXDLS motif, CTBP-binding motif lies at 255 to 259; the sequence is PVDLS. Residues 261–265 carry the Nuclear localization signal motif; it reads KRPRC.

The protein belongs to the adenoviridae E1A protein family. As to quaternary structure, interacts with host UBE2I; this interaction interferes with polySUMOylation. Interacts with host RB1; this interaction induces the aberrant dissociation of RB1-E2F1 complex thereby disrupting the activity of RB1 and activating E2F1-regulated genes. Interacts with host ATF7; the interaction enhances ATF7-mediated viral transactivation activity which requires the zinc binding domains of both proteins. Isoform early E1A 32 kDa protein and isoform early E1A 26 kDa protein interact (via N-terminus) with CUL1 and E3 ubiquitin ligase RBX1; these interactions inhibit RBX1-CUL1-dependent elongation reaction of ubiquitin chains and attenuate ubiquitination of SCF(FBXW7) target proteins. Interacts (via PXLXP motif) with host ZMYND11/BS69 (via MYND-type zinc finger); this interaction inhibits E1A mediated transactivation. Interacts with host EP300; this interaction stimulates the acetylation of RB1 by recruiting EP300 and RB1 into a multimeric-protein complex. Interacts with host CTBP1 and CTBP2; this interaction seems to potentiate viral replication. Interacts with host DCAF7. Interacts with host DYRK1A. Interacts with host KPNA4; this interaction allows E1A import into the host nucleus. Interacts with host EP400; this interaction stabilizes MYC. Interacts with host TBP protein; this interaction probably disrupts the TBP-TATA complex. Interacts (via LXCXE motif) with host TMEM173/STING; this interaction impairs the ability of TMEM173/STING to sense cytosolic DNA and promote the production of type I interferon (IFN-alpha and IFN-beta). Interacts (via C-terminus) with host ZBED1/hDREF (via C-terminus); the interaction is direct.

The protein localises to the host nucleus. Functionally, plays a role in viral genome replication by driving entry of quiescent cells into the cell cycle. Stimulation of progression from G1 to S phase allows the virus to efficiently use the cellular DNA replicating machinery to achieve viral genome replication. E1A protein has both transforming and trans-activating activities. Induces the disassembly of the E2F1 transcription factor from RB1 by direct competition for the same binding site on RB1, with subsequent transcriptional activation of E2F1-regulated S-phase genes and of the E2 region of the adenoviral genome. Release of E2F1 leads to the ARF-mediated inhibition of MDM2 and causes TP53/p53 to accumulate because it is not targeted for degradation by MDM2-mediated ubiquitination anymore. This increase in TP53, in turn, would arrest the cell proliferation and direct its death but this effect is counteracted by the viral protein E1B-55K. Inactivation of the ability of RB1 to arrest the cell cycle is critical for cellular transformation, uncontrolled cellular growth and proliferation induced by viral infection. Interaction with RBX1 and CUL1 inhibits ubiquitination of the proteins targeted by SCF(FBXW7) ubiquitin ligase complex, and may be linked to unregulated host cell proliferation. The tumorigenesis-restraining activity of E1A may be related to the disruption of the host CtBP-CtIP complex through the CtBP binding motif. Interaction with host TMEM173/STING impairs the ability of TMEM173/STING to sense cytosolic DNA and promote the production of type I interferon (IFN-alpha and IFN-beta). Promotes the sumoylation of host ZBED1/hDREF with SUMO1. This chain is Early E1A protein, found in Homo sapiens (Human).